We begin with the raw amino-acid sequence, 404 residues long: L-cysteine:1D-myo-inositol 2-amino-2-deoxy-alpha-D-glucopyranoside ligase 1 (404 aa).

Cys47 is a Zn(2+) binding site. Residues 47–50, Thr62, and 85–87 contribute to the L-cysteinyl-5'-AMP site; these read CGIT and NIT. The short motif at 49-59 is the 'HIGH' region element; sequence ITPYDSTHLGH. The short motif at 188-193 is the 'ERGGDP' region element; it reads ERGGDP. Residue Trp228 coordinates L-cysteinyl-5'-AMP. Cys232 serves as a coordination point for Zn(2+). Position 250–252 (250–252) interacts with L-cysteinyl-5'-AMP; the sequence is GSD. Zn(2+) is bound at residue His257. Ile284 is an L-cysteinyl-5'-AMP binding site. Residues 290 to 294 carry the 'KMSKS' region motif; the sequence is KMSKS.

The protein belongs to the class-I aminoacyl-tRNA synthetase family. MshC subfamily. As to quaternary structure, monomer. The cofactor is Zn(2+).

It carries out the reaction 1D-myo-inositol 2-amino-2-deoxy-alpha-D-glucopyranoside + L-cysteine + ATP = 1D-myo-inositol 2-(L-cysteinylamino)-2-deoxy-alpha-D-glucopyranoside + AMP + diphosphate + H(+). Functionally, catalyzes the ATP-dependent condensation of GlcN-Ins and L-cysteine to form L-Cys-GlcN-Ins. The polypeptide is L-cysteine:1D-myo-inositol 2-amino-2-deoxy-alpha-D-glucopyranoside ligase 1 (Corynebacterium urealyticum (strain ATCC 43042 / DSM 7109)).